A 407-amino-acid polypeptide reads, in one-letter code: Arginine deiminase (407 aa).

The active-site Amidino-cysteine intermediate is cysteine 397.

Belongs to the arginine deiminase family.

It is found in the cytoplasm. The enzyme catalyses L-arginine + H2O = L-citrulline + NH4(+). The protein operates within amino-acid degradation; L-arginine degradation via ADI pathway; carbamoyl phosphate from L-arginine: step 1/2. This is Arginine deiminase from Escherichia coli O81 (strain ED1a).